A 398-amino-acid polypeptide reads, in one-letter code: Succinyl-diaminopimelate desuccinylase (398 aa).

A Zn(2+)-binding site is contributed by His68. Residue Asp70 is part of the active site. Position 101 (Asp101) interacts with Zn(2+). Glu135 functions as the Proton acceptor in the catalytic mechanism. 3 residues coordinate Zn(2+): Glu136, Glu164, and His349.

Belongs to the peptidase M20A family. DapE subfamily. As to quaternary structure, homodimer. Requires Zn(2+) as cofactor. Co(2+) serves as cofactor.

It catalyses the reaction N-succinyl-(2S,6S)-2,6-diaminopimelate + H2O = (2S,6S)-2,6-diaminopimelate + succinate. It functions in the pathway amino-acid biosynthesis; L-lysine biosynthesis via DAP pathway; LL-2,6-diaminopimelate from (S)-tetrahydrodipicolinate (succinylase route): step 3/3. Functionally, catalyzes the hydrolysis of N-succinyl-L,L-diaminopimelic acid (SDAP), forming succinate and LL-2,6-diaminopimelate (DAP), an intermediate involved in the bacterial biosynthesis of lysine and meso-diaminopimelic acid, an essential component of bacterial cell walls. This Wolbachia pipientis wMel protein is Succinyl-diaminopimelate desuccinylase.